A 217-amino-acid chain; its full sequence is Vesicle transport through interaction with t-SNAREs homolog 1A (217 aa).

The Cytoplasmic segment spans residues 1–192; it reads MDVFERTEQN…TGIARRLATN (192 aa). Positions 36 to 97 form a coiled coil; that stretch reads AVREVENDID…AQLQSSNQTN (62 aa). The interval 90 to 109 is disordered; sequence LQSSNQTNSNPWSNAPDDYQ. The t-SNARE coiled-coil homology domain maps to 123 to 185; it reads SNMLDSTSDR…KSARKIMTGI (63 aa). A helical; Anchor for type IV membrane protein transmembrane segment spans residues 193-213; it reads KVILSIIILLLMGIIALIICL. Topologically, residues 214–217 are vesicular; that stretch reads KWLR.

Belongs to the VTI1 family. As to quaternary structure, component of the SNARE complex composed of syn7A, syn8A, vamp7A and vti1A.

Its subcellular location is the membrane. The protein localises to the cytoplasmic vesicle. It is found in the secretory vesicle membrane. The protein resides in the clathrin-coated vesicle membrane. It localises to the endosome membrane. Its subcellular location is the endoplasmic reticulum membrane. Its function is as follows. V-SNARE that mediates vesicle transport pathways through interactions with t-SNAREs on the target membrane. These interactions are proposed to mediate aspects of the specificity of vesicle trafficking and to promote fusion of the lipid bilayers. The chain is Vesicle transport through interaction with t-SNAREs homolog 1A from Dictyostelium discoideum (Social amoeba).